Consider the following 161-residue polypeptide: SsrA-binding protein (161 aa).

Belongs to the SmpB family.

It is found in the cytoplasm. Required for rescue of stalled ribosomes mediated by trans-translation. Binds to transfer-messenger RNA (tmRNA), required for stable association of tmRNA with ribosomes. tmRNA and SmpB together mimic tRNA shape, replacing the anticodon stem-loop with SmpB. tmRNA is encoded by the ssrA gene; the 2 termini fold to resemble tRNA(Ala) and it encodes a 'tag peptide', a short internal open reading frame. During trans-translation Ala-aminoacylated tmRNA acts like a tRNA, entering the A-site of stalled ribosomes, displacing the stalled mRNA. The ribosome then switches to translate the ORF on the tmRNA; the nascent peptide is terminated with the 'tag peptide' encoded by the tmRNA and targeted for degradation. The ribosome is freed to recommence translation, which seems to be the essential function of trans-translation. The polypeptide is SsrA-binding protein (Psychromonas ingrahamii (strain DSM 17664 / CCUG 51855 / 37)).